A 338-amino-acid chain; its full sequence is UbiA prenyltransferase domain-containing protein 1 (338 aa).

Ala-2 carries the post-translational modification N-acetylalanine. A run of 8 helical transmembrane segments spans residues 83–103, 134–154, 160–180, 188–208, 209–229, 245–267, 277–297, and 315–335; these read LLVGCAVAVLAVHGAGNLVNT, FGVFLYTLGCVCAACLYYLSP, LALIYFGGLSGSFLYTGGIGF, LIILITFGPLAVMFAYAIQVG, SLAIFPLVYAIPLALSTEAIL, IVTLAILIGPTFSYILYNTLLFL, THCTISLALPLLTIPMAFSLE, and LNLLLGLFYVFGIILAPAGSL.

Belongs to the UbiA prenyltransferase family. As to quaternary structure, interacts with HMGCR and SOAT1. As to expression, ubiquitously expressed.

It is found in the endoplasmic reticulum membrane. The protein localises to the golgi apparatus membrane. The protein resides in the mitochondrion membrane. It localises to the cytoplasm. Its subcellular location is the nucleus. The catalysed reaction is menadiol + (2E,6E,10E)-geranylgeranyl diphosphate = menaquinol-4 + diphosphate. It catalyses the reaction all-trans-decaprenyl diphosphate + 4-hydroxybenzoate = 4-hydroxy-3-(all-trans-decaprenyl)benzoate + diphosphate. It functions in the pathway quinol/quinone metabolism; menaquinone biosynthesis. The protein operates within cofactor biosynthesis; ubiquinone biosynthesis. Functionally, prenyltransferase that mediates the formation of menaquinone-4 (MK-4) and coenzyme Q10. MK-4 is a vitamin K2 isoform present at high concentrations in the brain, kidney and pancreas, and is required for endothelial cell development. Mediates the conversion of phylloquinone (PK) into MK-4, probably by cleaving the side chain of phylloquinone (PK) to release 2-methyl-1,4-naphthoquinone (menadione; K3) and then prenylating it with geranylgeranyl pyrophosphate (GGPP) to form MK-4. Also plays a role in cardiovascular development independently of MK-4 biosynthesis, by acting as a coenzyme Q10 biosynthetic enzyme: coenzyme Q10, also named ubiquinone, plays an important antioxidant role in the cardiovascular system. Mediates biosynthesis of coenzyme Q10 in the Golgi membrane, leading to protect cardiovascular tissues from NOS3/eNOS-dependent oxidative stress. The polypeptide is UbiA prenyltransferase domain-containing protein 1 (Homo sapiens (Human)).